The sequence spans 61 residues: Large ribosomal subunit protein uL30 (61 aa).

This sequence belongs to the universal ribosomal protein uL30 family. Part of the 50S ribosomal subunit.

The protein is Large ribosomal subunit protein uL30 of Chlorobium phaeobacteroides (strain BS1).